We begin with the raw amino-acid sequence, 540 residues long: Maintenance of mitochondrial morphology protein 1 (540 aa).

The Lumenal segment spans residues 1–25 (MAGPSNQTQPPPPVLTQPSLSFTQG). A helical membrane pass occupies residues 26-46 (LLVGQLSVVLLIGAFIKFFIF). The Cytoplasmic portion of the chain corresponds to 47–540 (GEAPPHPSRN…GSMPDPVVVT (494 aa)). Disordered regions lie at residues 52–135 (HPSR…SHQP), 275–331 (GPGT…ATAA), 416–471 (GRTG…GGSM), and 509–540 (YGGA…VVVT). Polar residues-rich tracts occupy residues 69 to 81 (YSLN…SSPR), 88 to 105 (STSN…NTRS), and 112 to 121 (YSATPTNPTS). Over residues 122–132 (KHSRSRPHHSS) the composition is skewed to basic residues. In terms of domain architecture, SMP-LTD spans 134–409 (QPESLDWFNV…EPRVQVVGLP (276 aa)). The span at 321 to 331 (TNTNTAGATAA) shows a compositional bias: low complexity. Composition is skewed to gly residues over residues 442-471 (TAGG…GGSM) and 511-521 (GAQGGGGGGGR).

The protein belongs to the MMM1 family. As to quaternary structure, homodimer. Component of the ER-mitochondria encounter structure (ERMES) or MDM complex, composed of MMM1, MDM10, MDM12 and MDM34. An MMM1 homodimer associates with one molecule of MDM12 on each side in a pairwise head-to-tail manner, and the SMP-LTD domains of MMM1 and MDM12 generate a continuous hydrophobic tunnel for phospholipid trafficking.

The protein resides in the endoplasmic reticulum membrane. Component of the ERMES/MDM complex, which serves as a molecular tether to connect the endoplasmic reticulum (ER) and mitochondria. Components of this complex are involved in the control of mitochondrial shape and protein biogenesis, and function in nonvesicular lipid trafficking between the ER and mitochondria. The MDM12-MMM1 subcomplex functions in the major beta-barrel assembly pathway that is responsible for biogenesis of all outer membrane beta-barrel proteins, and acts in a late step after the SAM complex. The MDM10-MDM12-MMM1 subcomplex further acts in the TOM40-specific pathway after the action of the MDM12-MMM1 complex. Essential for establishing and maintaining the structure of mitochondria and maintenance of mtDNA nucleoids. This chain is Maintenance of mitochondrial morphology protein 1, found in Blastomyces gilchristii (strain SLH14081) (Blastomyces dermatitidis).